The chain runs to 279 residues: Shikimate dehydrogenase (NADP(+)) (279 aa).

Residues 20-22 (SRS) and Thr67 each bind shikimate. Lys71 acts as the Proton acceptor in catalysis. An NADP(+)-binding site is contributed by Asp83. 2 residues coordinate shikimate: Asn92 and Asp108. NADP(+) is bound by residues 134–138 (GAGGA) and Leu223. Tyr225 contacts shikimate. Gly246 contacts NADP(+).

It belongs to the shikimate dehydrogenase family. As to quaternary structure, homodimer.

It catalyses the reaction shikimate + NADP(+) = 3-dehydroshikimate + NADPH + H(+). Its pathway is metabolic intermediate biosynthesis; chorismate biosynthesis; chorismate from D-erythrose 4-phosphate and phosphoenolpyruvate: step 4/7. Functionally, involved in the biosynthesis of the chorismate, which leads to the biosynthesis of aromatic amino acids. Catalyzes the reversible NADPH linked reduction of 3-dehydroshikimate (DHSA) to yield shikimate (SA). The protein is Shikimate dehydrogenase (NADP(+)) of Cereibacter sphaeroides (strain ATCC 17025 / ATH 2.4.3) (Rhodobacter sphaeroides).